The primary structure comprises 684 residues: Glycine--tRNA ligase beta subunit (684 aa).

Belongs to the class-II aminoacyl-tRNA synthetase family. In terms of assembly, tetramer of two alpha and two beta subunits.

It is found in the cytoplasm. It carries out the reaction tRNA(Gly) + glycine + ATP = glycyl-tRNA(Gly) + AMP + diphosphate. This is Glycine--tRNA ligase beta subunit from Pseudomonas syringae pv. syringae (strain B728a).